The following is a 420-amino-acid chain: Serine protease inhibitor A3B (420 aa).

The signal sequence occupies residues 1–17; it reads MAFIAALGLLMAEICPA. N-linked (GlcNAc...) asparagine glycans are attached at residues asparagine 104 and asparagine 349. Residues 367–392 form an RCL region; it reads GTEGDAITIVGYNFMSAKLKPVFVKF.

It belongs to the serpin family.

It is found in the secreted. The protein is Serine protease inhibitor A3B (Serpina3b) of Mus musculus (Mouse).